The sequence spans 295 residues: Protease HtpX (295 aa).

2 helical membrane-spanning segments follow: residues 4–24 (ILLF…TLSL) and 42–62 (QLLV…LFIS). His147 provides a ligand contact to Zn(2+). Residue Glu148 is part of the active site. Residue His151 participates in Zn(2+) binding. The next 2 helical transmembrane spans lie at 158 to 178 (VTLA…ARII) and 199 to 219 (ITTI…VMWF). Glu224 contacts Zn(2+).

It belongs to the peptidase M48B family. The cofactor is Zn(2+).

The protein localises to the cell inner membrane. The chain is Protease HtpX from Pseudomonas syringae pv. tomato (strain ATCC BAA-871 / DC3000).